Consider the following 316-residue polypeptide: Endochitinase 2 (316 aa).

The signal sequence occupies residues 1 to 18 (EFTTLFLLFSVLLLSASA). The region spanning 19–60 (EQCGSQAGGALCASGLCCSKFGWCGNTNDYCGPGNCQSQCPG) is the Chitin-binding type-1 domain. Cystine bridges form between Cys-21/Cys-36, Cys-30/Cys-42, Cys-35/Cys-49, Cys-54/Cys-58, Cys-87/Cys-150, Cys-162/Cys-170, and Cys-269/Cys-301. The Proton donor role is filled by Glu-132. A propeptide spans 310-316 (GLLVDTV) (removed in mature form, vacuolar targeting).

Belongs to the glycosyl hydrolase 19 family. Chitinase class I subfamily.

The protein resides in the vacuole. It catalyses the reaction Random endo-hydrolysis of N-acetyl-beta-D-glucosaminide (1-&gt;4)-beta-linkages in chitin and chitodextrins.. Its function is as follows. Defense against chitin-containing fungal pathogens. The protein is Endochitinase 2 (CHTB2) of Solanum tuberosum (Potato).